A 339-amino-acid chain; its full sequence is Fructose-1,6-bisphosphatase, cytosolic (339 aa).

Mg(2+) is bound by residues glutamate 71, glutamate 100, aspartate 121, leucine 123, and aspartate 124. Substrate contacts are provided by residues 124–127 (DGSS), asparagine 215, tyrosine 247, tyrosine 267, and lysine 277. Glutamate 283 provides a ligand contact to Mg(2+).

This sequence belongs to the FBPase class 1 family. The cofactor is Mg(2+).

It localises to the cytoplasm. It carries out the reaction beta-D-fructose 1,6-bisphosphate + H2O = beta-D-fructose 6-phosphate + phosphate. This Oryza sativa subsp. indica (Rice) protein is Fructose-1,6-bisphosphatase, cytosolic.